The primary structure comprises 188 residues: MFDQHKIEKAVRLILEAIGENPEREGLKGTPARVARMYEEIFSGLQEDPEEHLQKIFSEEHEEMVIVKDIPLYSICEHHLLPFYGKAHVAYIPRKGKVTGLSKLARVVEGFAKRPQLQERLTSQIADTIMRRLNPIGVLVVIEAEHMCMTFRGVKKPGSKTVTSAVRGLFRKNVATRAEAFSLIKGQA.

3 residues coordinate Zn(2+): Cys76, His79, and Cys148.

Belongs to the GTP cyclohydrolase I family. Homomer.

The enzyme catalyses GTP + H2O = 7,8-dihydroneopterin 3'-triphosphate + formate + H(+). It participates in cofactor biosynthesis; 7,8-dihydroneopterin triphosphate biosynthesis; 7,8-dihydroneopterin triphosphate from GTP: step 1/1. This chain is GTP cyclohydrolase 1, found in Pelotomaculum thermopropionicum (strain DSM 13744 / JCM 10971 / SI).